Here is a 94-residue protein sequence, read N- to C-terminus: uncharacterized protein (94 aa).

2 helical membrane-spanning segments follow: residues 7–24 and 39–61; these read IFFIIVLVGFALFMSFNV and AVPITLSLLFAFACGALTALLFL. The tract at residues 68 to 94 is disordered; the sequence is TRKQKREDSPTSAPTGGVSSPEHVDVP.

It is found in the cell membrane. This is an uncharacterized protein from Treponema pallidum (strain Nichols).